The following is a 594-amino-acid chain: DNA polymerase II small subunit (594 aa).

It belongs to the DNA polymerase delta/II small subunit family. As to quaternary structure, heterodimer of a large subunit and a small subunit.

The enzyme catalyses DNA(n) + a 2'-deoxyribonucleoside 5'-triphosphate = DNA(n+1) + diphosphate. It catalyses the reaction Exonucleolytic cleavage in the 3'- to 5'-direction to yield nucleoside 5'-phosphates.. Possesses two activities: a DNA synthesis (polymerase) and an exonucleolytic activity that degrades single-stranded DNA in the 3' to 5' direction. Has a template-primer preference which is characteristic of a replicative DNA polymerase. The chain is DNA polymerase II small subunit (polB) from Methanocaldococcus jannaschii (strain ATCC 43067 / DSM 2661 / JAL-1 / JCM 10045 / NBRC 100440) (Methanococcus jannaschii).